The chain runs to 367 residues: Protein-glutamate methylesterase/protein-glutamine glutaminase (367 aa).

One can recognise a Response regulatory domain in the interval 6–123 (RVLVVDDSAF…SLGIKQLADE (118 aa)). Position 57 is a 4-aspartylphosphate (Asp-57). A CheB-type methylesterase domain is found at 165-361 (ISKKEIVVVI…DILLKKVNEY (197 aa)). Residues Ser-177, His-204, and Asp-303 contribute to the active site.

Belongs to the CheB family. Phosphorylated by CheA. Phosphorylation of the N-terminal regulatory domain activates the methylesterase activity.

It localises to the cytoplasm. It carries out the reaction [protein]-L-glutamate 5-O-methyl ester + H2O = L-glutamyl-[protein] + methanol + H(+). The catalysed reaction is L-glutaminyl-[protein] + H2O = L-glutamyl-[protein] + NH4(+). Functionally, involved in chemotaxis. Part of a chemotaxis signal transduction system that modulates chemotaxis in response to various stimuli. Catalyzes the demethylation of specific methylglutamate residues introduced into the chemoreceptors (methyl-accepting chemotaxis proteins or MCP) by CheR. Also mediates the irreversible deamidation of specific glutamine residues to glutamic acid. In Caldanaerobacter subterraneus subsp. tengcongensis (strain DSM 15242 / JCM 11007 / NBRC 100824 / MB4) (Thermoanaerobacter tengcongensis), this protein is Protein-glutamate methylesterase/protein-glutamine glutaminase.